The sequence spans 702 residues: Penicillin-binding protein activator LpoA (702 aa).

The signal sequence occupies residues 1–26; that stretch reads MVPSTFLRSKPARCLPVLLATLIFAG. Cys-27 is lipidated: N-palmitoyl cysteine. The S-diacylglycerol cysteine moiety is linked to residue Cys-27. Positions 327-378 are disordered; that stretch reads GSRADPVQAPTQDQAAPAAEPAAQAPATSTTPQTTASPATQPVTAPAAQPQP. Positions 330–378 are enriched in low complexity; sequence ADPVQAPTQDQAAPAAEPAAQAPATSTTPQTTASPATQPVTAPAAQPQP.

This sequence belongs to the LpoA family. As to quaternary structure, interacts with PBP1a.

Its subcellular location is the cell outer membrane. Its function is as follows. Regulator of peptidoglycan synthesis that is essential for the function of penicillin-binding protein 1A (PBP1a). This is Penicillin-binding protein activator LpoA from Klebsiella pneumoniae subsp. pneumoniae (strain ATCC 700721 / MGH 78578).